The primary structure comprises 534 residues: Phosphoenolpyruvate carboxykinase (ATP) (534 aa).

The substrate site is built by R60, Y195, and K201. Residues K201, H221, and G237–T245 contribute to the ATP site. Positions 201 and 221 each coordinate Mn(2+). D258 serves as a coordination point for Mn(2+). ATP is bound by residues E287, R324, and T449. Residue R324 participates in substrate binding.

The protein belongs to the phosphoenolpyruvate carboxykinase (ATP) family. It depends on Mn(2+) as a cofactor.

The protein resides in the cytoplasm. The catalysed reaction is oxaloacetate + ATP = phosphoenolpyruvate + ADP + CO2. The protein operates within carbohydrate biosynthesis; gluconeogenesis. Its function is as follows. Involved in the gluconeogenesis. Catalyzes the conversion of oxaloacetate (OAA) to phosphoenolpyruvate (PEP) through direct phosphoryl transfer between the nucleoside triphosphate and OAA. The chain is Phosphoenolpyruvate carboxykinase (ATP) from Flavobacterium johnsoniae (strain ATCC 17061 / DSM 2064 / JCM 8514 / BCRC 14874 / CCUG 350202 / NBRC 14942 / NCIMB 11054 / UW101) (Cytophaga johnsonae).